We begin with the raw amino-acid sequence, 1988 residues long: Protein Ycf2 (1988 aa).

1337–1344 (GSIGTGRS) contacts ATP. Residues 1377-1396 (SDDDSDDIDDSGDIDDSDDI) form a disordered region.

It belongs to the Ycf2 family.

It localises to the plastid. It is found in the chloroplast stroma. Functionally, probable ATPase of unknown function. Its presence in a non-photosynthetic plant (Epifagus virginiana) and experiments in tobacco indicate that it has an essential function which is probably not related to photosynthesis. The sequence is that of Protein Ycf2 from Cucumis sativus (Cucumber).